A 336-amino-acid chain; its full sequence is Fructose-1,6-bisphosphatase class 1 (336 aa).

The Mg(2+) site is built by E90, D112, L114, and D115. Substrate is bound by residues D115–S118, N211, and K277. E283 is a Mg(2+) binding site.

It belongs to the FBPase class 1 family. In terms of assembly, homotetramer. The cofactor is Mg(2+).

It localises to the cytoplasm. It catalyses the reaction beta-D-fructose 1,6-bisphosphate + H2O = beta-D-fructose 6-phosphate + phosphate. The protein operates within carbohydrate biosynthesis; gluconeogenesis. This chain is Fructose-1,6-bisphosphatase class 1, found in Pseudomonas savastanoi pv. phaseolicola (strain 1448A / Race 6) (Pseudomonas syringae pv. phaseolicola (strain 1448A / Race 6)).